Consider the following 1369-residue polypeptide: MutS protein homolog 5 (1369 aa).

Residues Ile138–Asn190 are disordered. Acidic residues predominate over residues Glu173–Gly184. Gly639–Ser646 is a binding site for ATP. Disordered stretches follow at residues Ser880–Ser915, Lys935–Asn1135, Leu1153–Asn1182, and Asn1248–Ser1278. Positions Val884–Glu894 are enriched in basic and acidic residues. 2 stretches are compositionally biased toward polar residues: residues Ala895–Ser915 and Thr941–Ser950. The segment covering Phe954–Gln967 has biased composition (acidic residues). Positions Gln991 to Thr1003 are enriched in polar residues. Positions Ser1024 to Ser1037 are enriched in low complexity. A compositionally biased stretch (polar residues) spans Val1049 to Ser1065. The segment covering Ser1073–Glu1084 has biased composition (basic and acidic residues). 2 stretches are compositionally biased toward polar residues: residues Lys1111–Arg1124 and Leu1153–Ser1167. The span at Pro1254 to Arg1263 shows a compositional bias: basic and acidic residues.

This sequence belongs to the DNA mismatch repair MutS family. In terms of assembly, heterooligomer of him-14 and msh-5. Interacts with the brc-1-brd-1 heterodimer. As to expression, expressed in the germline.

It is found in the chromosome. Functionally, crucial component in meiotic recombination, functioning at some point after the initiation step of recombination. Plays a role in promoting the crossover outcome of meiotic recombination events. Required for formation of normal meiotic crossover, and crossover and chiasmata generated by artificially made DNA breaks. Together with him-14 and zhp-3 plays a role in the activation of DNA damage-dependent apoptosis at the DNA damage checkpoint in pachytene cells. The chain is MutS protein homolog 5 from Caenorhabditis elegans.